The following is a 126-amino-acid chain: Glycine cleavage system H protein (126 aa).

The Lipoyl-binding domain maps to 22 to 104 (TVTIGITEYA…YEKAWMVKVE (83 aa)). Residue lysine 63 is modified to N6-lipoyllysine.

Belongs to the GcvH family. In terms of assembly, the glycine cleavage system is composed of four proteins: P, T, L and H. The cofactor is (R)-lipoate.

Its function is as follows. The glycine cleavage system catalyzes the degradation of glycine. The H protein shuttles the methylamine group of glycine from the P protein to the T protein. Is also involved in protein lipoylation via its role as an octanoyl/lipoyl carrier protein intermediate. The polypeptide is Glycine cleavage system H protein (Staphylococcus saprophyticus subsp. saprophyticus (strain ATCC 15305 / DSM 20229 / NCIMB 8711 / NCTC 7292 / S-41)).